The following is a 210-amino-acid chain: Proteasome subunit beta (210 aa).

Positions 1–9 (MNDKNTLKG) are cleaved as a propeptide — removed in mature form; by autocatalysis. Residue Thr10 is the Nucleophile of the active site.

This sequence belongs to the peptidase T1B family. The 20S proteasome core is composed of 14 alpha and 14 beta subunits that assemble into four stacked heptameric rings, resulting in a barrel-shaped structure. The two inner rings, each composed of seven catalytic beta subunits, are sandwiched by two outer rings, each composed of seven alpha subunits. The catalytic chamber with the active sites is on the inside of the barrel. Has a gated structure, the ends of the cylinder being occluded by the N-termini of the alpha-subunits. Is capped at one or both ends by the proteasome regulatory ATPase, PAN.

The protein resides in the cytoplasm. It carries out the reaction Cleavage of peptide bonds with very broad specificity.. With respect to regulation, the formation of the proteasomal ATPase PAN-20S proteasome complex, via the docking of the C-termini of PAN into the intersubunit pockets in the alpha-rings, triggers opening of the gate for substrate entry. Interconversion between the open-gate and close-gate conformations leads to a dynamic regulation of the 20S proteasome proteolysis activity. In terms of biological role, component of the proteasome core, a large protease complex with broad specificity involved in protein degradation. The polypeptide is Proteasome subunit beta (Methanothermobacter thermautotrophicus (strain ATCC 29096 / DSM 1053 / JCM 10044 / NBRC 100330 / Delta H) (Methanobacterium thermoautotrophicum)).